The sequence spans 198 residues: Sortase D (198 aa).

The helical transmembrane segment at Leu7–Ile25 threads the bilayer. The segment covering Lys36–Gln46 has biased composition (basic and acidic residues). Residues Lys36–Glu67 are disordered. The segment covering Ala48–Gln57 has biased composition (polar residues). The active-site Proton donor/acceptor is the His119. Cys177 (acyl-thioester intermediate) is an active-site residue.

This sequence belongs to the bacterial sortase family. Class D subfamily.

It is found in the cell membrane. In terms of biological role, transpeptidase that anchors surface proteins to the cell wall. Recognizes and modifies its substrate by proteolytic cleavage of a C-terminal sorting signal. Following cleavage, a covalent intermediate is formed via a thioester bond between the sortase and its substrate, which is then transferred and covalently attached to the cell wall. This sortase recognizes a Leu-Pro-Asp-Thr-Ser/Ala (LPDTS/A) motif. It has two substrates, YhcR and YfkN. The chain is Sortase D from Bacillus subtilis (strain 168).